The chain runs to 352 residues: Alanine racemase (352 aa).

Lysine 33 (proton acceptor; specific for D-alanine) is an active-site residue. Lysine 33 carries the post-translational modification N6-(pyridoxal phosphate)lysine. Arginine 129 serves as a coordination point for substrate. Catalysis depends on tyrosine 250, which acts as the Proton acceptor; specific for L-alanine. Methionine 298 provides a ligand contact to substrate.

The protein belongs to the alanine racemase family. Pyridoxal 5'-phosphate is required as a cofactor.

It carries out the reaction L-alanine = D-alanine. It functions in the pathway amino-acid biosynthesis; D-alanine biosynthesis; D-alanine from L-alanine: step 1/1. In terms of biological role, catalyzes the interconversion of L-alanine and D-alanine. May also act on other amino acids. This is Alanine racemase (alr) from Neisseria meningitidis serogroup A / serotype 4A (strain DSM 15465 / Z2491).